A 495-amino-acid polypeptide reads, in one-letter code: Glycerol kinase (495 aa).

Thr14 contacts ADP. ATP contacts are provided by Thr14, Thr15, and Ser16. Thr14 serves as a coordination point for sn-glycerol 3-phosphate. Arg18 contributes to the ADP binding site. Residues Arg84, Glu85, Tyr136, and Asp246 each contribute to the sn-glycerol 3-phosphate site. Glycerol-binding residues include Arg84, Glu85, Tyr136, Asp246, and Gln247. ADP contacts are provided by Thr268 and Gly312. The ATP site is built by Thr268, Gly312, Gln316, and Gly413. ADP is bound by residues Gly413 and Asn417.

This sequence belongs to the FGGY kinase family.

It carries out the reaction glycerol + ATP = sn-glycerol 3-phosphate + ADP + H(+). The protein operates within polyol metabolism; glycerol degradation via glycerol kinase pathway; sn-glycerol 3-phosphate from glycerol: step 1/1. Its activity is regulated as follows. Inhibited by fructose 1,6-bisphosphate (FBP). Its function is as follows. Key enzyme in the regulation of glycerol uptake and metabolism. Catalyzes the phosphorylation of glycerol to yield sn-glycerol 3-phosphate. The protein is Glycerol kinase of Bdellovibrio bacteriovorus (strain ATCC 15356 / DSM 50701 / NCIMB 9529 / HD100).